A 229-amino-acid polypeptide reads, in one-letter code: Uridylate kinase (229 aa).

Residue Gly-11–Ser-12 participates in ATP binding. Residue Gly-45 coordinates UMP. Gly-46 and Arg-50 together coordinate ATP. Residues Asp-67 and Thr-114 to Thr-120 each bind UMP. Positions 140, 146, and 149 each coordinate ATP.

Belongs to the UMP kinase family. As to quaternary structure, homohexamer.

The protein resides in the cytoplasm. The enzyme catalyses UMP + ATP = UDP + ADP. Its pathway is pyrimidine metabolism; CTP biosynthesis via de novo pathway; UDP from UMP (UMPK route): step 1/1. With respect to regulation, inhibited by UTP. Its function is as follows. Catalyzes the reversible phosphorylation of UMP to UDP. This Thermoplasma acidophilum (strain ATCC 25905 / DSM 1728 / JCM 9062 / NBRC 15155 / AMRC-C165) protein is Uridylate kinase.